The primary structure comprises 235 residues: Ribonuclease 3 (235 aa).

Positions 7–131 constitute an RNase III domain; it reads LSALEARIGH…IIGAVFLDGG (125 aa). E45 is a binding site for Mg(2+). D49 is an active-site residue. Positions 117 and 120 each coordinate Mg(2+). E120 is an active-site residue. Positions 156-225 constitute a DRBM domain; it reads DPKTTLQEWA…AAAFLTREKI (70 aa).

The protein belongs to the ribonuclease III family. As to quaternary structure, homodimer. Requires Mg(2+) as cofactor.

It is found in the cytoplasm. It catalyses the reaction Endonucleolytic cleavage to 5'-phosphomonoester.. Functionally, digests double-stranded RNA. Involved in the processing of primary rRNA transcript to yield the immediate precursors to the large and small rRNAs (23S and 16S). Processes some mRNAs, and tRNAs when they are encoded in the rRNA operon. Processes pre-crRNA and tracrRNA of type II CRISPR loci if present in the organism. This Methylocella silvestris (strain DSM 15510 / CIP 108128 / LMG 27833 / NCIMB 13906 / BL2) protein is Ribonuclease 3.